Here is a 132-residue protein sequence, read N- to C-terminus: FPRL1 inhibitory protein (132 aa).

The signal sequence occupies residues 1–28 (MKKNITKVIIASTVIATGLLTQTNDAKA).

Belongs to the CHIPS/FLIPr family.

Its subcellular location is the secreted. Its function is as follows. May be involved in countering the first line of host defense mechanisms. Impairs the leukocyte response to FPRL1 agonists by binding directly to host FPRL1. The polypeptide is FPRL1 inhibitory protein (flr) (Staphylococcus aureus (strain MW2)).